Consider the following 726-residue polypeptide: tRNA endonuclease ANKZF1 (726 aa).

The interval 40-61 (LARAPRTSCSGSGERESPERKL) is disordered. Over residues 52–61 (GERESPERKL) the composition is skewed to basic and acidic residues. Residues 72–96 (LFCSTCDQTFQNHQEQREHYKLDWH) form a C2H2-type zinc finger. Positions 120–130 (STGDLSSISGS) are enriched in low complexity. A disordered region spans residues 120 to 141 (STGDLSSISGSEDSDSASEEDL). Residues 131–141 (EDSDSASEEDL) are compositionally biased toward acidic residues. The region spanning 203–346 (GPRDCVVLMA…QRVLHKLTTL (144 aa)) is the VLRF1 domain. The active site involves Gln246. Residues Ser258, Ser361, and Ser398 each carry the phosphoserine modification. Disordered stretches follow at residues 387-409 (DEKE…EGED) and 436-474 (RRRR…SSQA). Positions 436 to 445 (RRRRKRNKKE) are enriched in basic residues. Residues 457 to 473 (TLLQQTQEEEPSTQSSQ) show a composition bias toward low complexity. Residues 493-526 (ELWNALLAACRAGDVGVLKLQLAPSPADPRVLSL) form an ANK 1 repeat. Ser533 bears the Phosphoserine mark. The stretch at 534-563 (GGFTLLHAAAAAGRGSVVRLLLEAGADPTV) is one ANK 2 repeat. The tract at residues 588 to 656 (MEKNPDAYDY…RRFAALSDRE (69 aa)) is disordered. Thr607 is modified (phosphothreonine). A coiled-coil region spans residues 609 to 659 (EMEARQATRKREQKAARRQREEQQQRQQEQEEREREEQRRFAALSDREKRA). The span at 610–656 (MEARQATRKREQKAARRQREEQQQRQQEQEEREREEQRRFAALSDRE) shows a compositional bias: basic and acidic residues. A VCP/p97-interacting motif (VIM) region spans residues 654–666 (DREKRALAAERRL). A phosphoserine mark is found at Ser675 and Ser680.

Belongs to the ANKZF1/VMS1 family. As to quaternary structure, interacts (via VIM motif) with VCP.

It localises to the cytoplasm. Its function is as follows. Endonuclease that cleaves polypeptidyl-tRNAs downstream of the ribosome-associated quality control (RQC) pathway to release incompletely synthesized polypeptides for degradation. The RQC pathway disassembles aberrantly stalled translation complexes to recycle or degrade the constituent parts. ANKZF1 acts downstream disassembly of stalled ribosomes and specifically cleaves off the terminal 3'-CCA nucleotides universal to all tRNAs from polypeptidyl-tRNAs, releasing (1) ubiquitinated polypeptides from 60S ribosomal subunit for degradation and (2) cleaved tRNAs. ANKZF1-cleaved tRNAs are then repaired and recycled by ELAC1 and TRNT1. Also plays a role in the cellular response to hydrogen peroxide and in the maintenance of mitochondrial integrity under conditions of cellular stress. This chain is tRNA endonuclease ANKZF1, found in Homo sapiens (Human).